Reading from the N-terminus, the 320-residue chain is Lipoyl synthase (320 aa).

The [4Fe-4S] cluster site is built by C67, C72, C78, C93, C97, C100, and S307. The Radical SAM core domain occupies 79-296 (FNHGTATFMI…REKAAEMGFE (218 aa)).

Belongs to the radical SAM superfamily. Lipoyl synthase family. [4Fe-4S] cluster is required as a cofactor.

The protein localises to the cytoplasm. The catalysed reaction is [[Fe-S] cluster scaffold protein carrying a second [4Fe-4S](2+) cluster] + N(6)-octanoyl-L-lysyl-[protein] + 2 oxidized [2Fe-2S]-[ferredoxin] + 2 S-adenosyl-L-methionine + 4 H(+) = [[Fe-S] cluster scaffold protein] + N(6)-[(R)-dihydrolipoyl]-L-lysyl-[protein] + 4 Fe(3+) + 2 hydrogen sulfide + 2 5'-deoxyadenosine + 2 L-methionine + 2 reduced [2Fe-2S]-[ferredoxin]. The protein operates within protein modification; protein lipoylation via endogenous pathway; protein N(6)-(lipoyl)lysine from octanoyl-[acyl-carrier-protein]: step 2/2. Its function is as follows. Catalyzes the radical-mediated insertion of two sulfur atoms into the C-6 and C-8 positions of the octanoyl moiety bound to the lipoyl domains of lipoate-dependent enzymes, thereby converting the octanoylated domains into lipoylated derivatives. The sequence is that of Lipoyl synthase from Actinobacillus succinogenes (strain ATCC 55618 / DSM 22257 / CCUG 43843 / 130Z).